A 225-amino-acid chain; its full sequence is Ribosome maturation factor RimP (225 aa).

The protein belongs to the RimP family.

Its subcellular location is the cytoplasm. Required for maturation of 30S ribosomal subunits. This chain is Ribosome maturation factor RimP, found in Rhodospirillum rubrum (strain ATCC 11170 / ATH 1.1.1 / DSM 467 / LMG 4362 / NCIMB 8255 / S1).